The chain runs to 314 residues: DNA-directed RNA polymerase subunit alpha (314 aa).

The interval Met1–Thr228 is alpha N-terminal domain (alpha-NTD). The alpha C-terminal domain (alpha-CTD) stretch occupies residues Lys245 to Asp314.

The protein belongs to the RNA polymerase alpha chain family. As to quaternary structure, homodimer. The RNAP catalytic core consists of 2 alpha, 1 beta, 1 beta' and 1 omega subunit. When a sigma factor is associated with the core the holoenzyme is formed, which can initiate transcription.

The catalysed reaction is RNA(n) + a ribonucleoside 5'-triphosphate = RNA(n+1) + diphosphate. In terms of biological role, DNA-dependent RNA polymerase catalyzes the transcription of DNA into RNA using the four ribonucleoside triphosphates as substrates. In Staphylococcus aureus (strain bovine RF122 / ET3-1), this protein is DNA-directed RNA polymerase subunit alpha.